A 418-amino-acid chain; its full sequence is Tyrosine--tRNA ligase (418 aa).

Y34 contacts L-tyrosine. The 'HIGH' region motif lies at 39–48; that stretch reads PTADSLHLGH. 2 residues coordinate L-tyrosine: Y169 and Q173. Residues 229-233 carry the 'KMSKS' region motif; it reads KFGKS. K232 serves as a coordination point for ATP. The 67-residue stretch at 352-418 folds into the S4 RNA-binding domain; that stretch reads LNIVDMLVTA…GKKKYAVLTY (67 aa).

The protein belongs to the class-I aminoacyl-tRNA synthetase family. TyrS type 1 subfamily. As to quaternary structure, homodimer.

It localises to the cytoplasm. The enzyme catalyses tRNA(Tyr) + L-tyrosine + ATP = L-tyrosyl-tRNA(Tyr) + AMP + diphosphate + H(+). Its function is as follows. Catalyzes the attachment of tyrosine to tRNA(Tyr) in a two-step reaction: tyrosine is first activated by ATP to form Tyr-AMP and then transferred to the acceptor end of tRNA(Tyr). The protein is Tyrosine--tRNA ligase of Streptococcus equi subsp. equi (strain 4047).